Reading from the N-terminus, the 307-residue chain is Ribosomal RNA small subunit methyltransferase H (307 aa).

Residues 34 to 36, aspartate 54, phenylalanine 79, aspartate 101, and glutamine 108 contribute to the S-adenosyl-L-methionine site; that span reads GGH.

This sequence belongs to the methyltransferase superfamily. RsmH family.

The protein localises to the cytoplasm. It catalyses the reaction cytidine(1402) in 16S rRNA + S-adenosyl-L-methionine = N(4)-methylcytidine(1402) in 16S rRNA + S-adenosyl-L-homocysteine + H(+). Functionally, specifically methylates the N4 position of cytidine in position 1402 (C1402) of 16S rRNA. The polypeptide is Ribosomal RNA small subunit methyltransferase H (Vesicomyosocius okutanii subsp. Calyptogena okutanii (strain HA)).